The chain runs to 72 residues: Osmotically-inducible lipoprotein B (72 aa).

The signal sequence occupies residues 1-23; it reads MFVTSKKMTAAVLAITLAMSLSA. Cysteine 24 is lipidated: N-palmitoyl cysteine. The S-diacylglycerol cysteine moiety is linked to residue cysteine 24.

The protein localises to the cell membrane. In terms of biological role, provides resistance to osmotic stress. May be important for stationary-phase survival. The protein is Osmotically-inducible lipoprotein B (osmB) of Escherichia coli O157:H7.